A 71-amino-acid polypeptide reads, in one-letter code: DNA-directed RNA polymerase subunit omega (71 aa).

It belongs to the RNA polymerase subunit omega family. In terms of assembly, the RNAP catalytic core consists of 2 alpha, 1 beta, 1 beta' and 1 omega subunit. When a sigma factor is associated with the core the holoenzyme is formed, which can initiate transcription.

The catalysed reaction is RNA(n) + a ribonucleoside 5'-triphosphate = RNA(n+1) + diphosphate. Promotes RNA polymerase assembly. Latches the N- and C-terminal regions of the beta' subunit thereby facilitating its interaction with the beta and alpha subunits. This is DNA-directed RNA polymerase subunit omega from Alkaliphilus oremlandii (strain OhILAs) (Clostridium oremlandii (strain OhILAs)).